The sequence spans 592 residues: MNSVQLPTAQSSLRSHIHRPSKPVVGFTHFSSRSRIAVAVLSRDETSMTPPPPKLPLPRLKVSPNSLQYPAGYLGAVPERTNEAENGSIAEAMEYLTNILSTKVYDIAIESPLQLAKKLSKRLGVRMYLKREDLQPVFSFKLRGAYNMMVKLPADQLAKGVICSSAGNHAQGVALSASKLGCTAVIVMPVTTPEIKWQAVENLGATVVLFGDSYDQAQAHAKIRAEEEGLTFIPPFDHPDVIAGQGTVGMEITRQAKGPLHAIFVPVGGGGLIAGIAAYVKRVSPEVKIIGVEPADANAMALSLHHGERVILDQVGGFADGVAVKEVGEETFRISRNLMDGVVLVTRDAICASIKDMFEEKRNILEPAGALALAGAEAYCKYYGLKDVNVVAITSGANMNFDKLRIVTELANVGRQQEAVLATLMPEKPGSFKQFCELVGPMNISEFKYRCSSEKEAVVLYSVGVHTAGELKALQKRMESSQLKTVNLTTSDLVKDHLRYLMGGRSTVGDEVLCRFTFPERPGALMNFLDSFSPRWNITLFHYRGQGETGANVLVGIQVPEQEMEEFKNRAKALGYDYFLVSDDDYFKLLMH.

The transit peptide at 1–91 directs the protein to the chloroplast; it reads MNSVQLPTAQ…NEAENGSIAE (91 aa). Lys-141 bears the N6-(pyridoxal phosphate)lysine mark. ACT-like domains follow at residues 419–490 and 512–583; these read AVLA…NLTT and VLCR…LVSD.

The protein belongs to the serine/threonine dehydratase family. The cofactor is pyridoxal 5'-phosphate.

It localises to the plastid. It is found in the chloroplast. It carries out the reaction L-threonine = 2-oxobutanoate + NH4(+). It participates in amino-acid biosynthesis; L-isoleucine biosynthesis; 2-oxobutanoate from L-threonine: step 1/1. With respect to regulation, allosterically inhibited by isoleucine. Strain GM11b is isoleucine feedback insensitive and is resistant to the antimetabolite L-O-methylthreonine. Functionally, catalyzes the formation of alpha-ketobutyrate from threonine in a two-step reaction. The first step is a dehydration of threonine, followed by rehydration and liberation of ammonia. The chain is Threonine dehydratase biosynthetic, chloroplastic (OMR1) from Arabidopsis thaliana (Mouse-ear cress).